A 57-amino-acid chain; its full sequence is Large ribosomal subunit protein bL32 (57 aa).

It belongs to the bacterial ribosomal protein bL32 family.

This chain is Large ribosomal subunit protein bL32, found in Ureaplasma parvum serovar 3 (strain ATCC 27815 / 27 / NCTC 11736).